Here is a 553-residue protein sequence, read N- to C-terminus: HTH-type transcriptional regulator SgrR (553 aa).

An HTH marR-type domain is found at 1 to 113 (MSTSRLQQQF…RQMLLSQLGR (113 aa)). A DNA-binding region (H-T-H motif) is located at residues 26-49 (LQALAEVLNCSRRHVRSLLGKMQH). Residues 163-494 (ELEPDLSHHW…EELHQDIESW (332 aa)) are solute-binding.

In terms of biological role, activates the small RNA gene sgrS under glucose-phosphate stress conditions as well as yfdZ. Represses its own transcription under both stress and non-stress conditions. Might act as a sensor of the intracellular accumulation of phosphoglucose by binding these molecules in its C-terminal solute-binding domain. This is HTH-type transcriptional regulator SgrR from Yersinia pestis bv. Antiqua (strain Antiqua).